Here is a 366-residue protein sequence, read N- to C-terminus: Aminomethyltransferase (366 aa).

Belongs to the GcvT family. The glycine cleavage system is composed of four proteins: P, T, L and H.

The enzyme catalyses N(6)-[(R)-S(8)-aminomethyldihydrolipoyl]-L-lysyl-[protein] + (6S)-5,6,7,8-tetrahydrofolate = N(6)-[(R)-dihydrolipoyl]-L-lysyl-[protein] + (6R)-5,10-methylene-5,6,7,8-tetrahydrofolate + NH4(+). In terms of biological role, the glycine cleavage system catalyzes the degradation of glycine. The polypeptide is Aminomethyltransferase (Bordetella pertussis (strain Tohama I / ATCC BAA-589 / NCTC 13251)).